Reading from the N-terminus, the 109-residue chain is Iron-sulfur cluster assembly protein CyaY (109 aa).

It belongs to the frataxin family.

Its function is as follows. Involved in iron-sulfur (Fe-S) cluster assembly. May act as a regulator of Fe-S biogenesis. The protein is Iron-sulfur cluster assembly protein CyaY of Shewanella sp. (strain ANA-3).